Consider the following 117-residue polypeptide: Large ribosomal subunit protein bL19 (117 aa).

Belongs to the bacterial ribosomal protein bL19 family.

This protein is located at the 30S-50S ribosomal subunit interface and may play a role in the structure and function of the aminoacyl-tRNA binding site. This chain is Large ribosomal subunit protein bL19, found in Blochmanniella floridana.